A 634-amino-acid chain; its full sequence is DNA gyrase subunit B (634 aa).

The segment at 1 to 220 (MSYDASAIRV…EEVFLDKGGV (220 aa)) is ATPase domain. A transducer domain region spans residues 221–390 (ASFAKALAEG…EAARKARELV (170 aa)). The 119-residue stretch at 416–534 (AELFIVEGDS…RGHVYIAQPP (119 aa)) folds into the Toprim domain. Mg(2+) is bound by residues Glu-422, Asp-499, and Asp-501.

Belongs to the type II topoisomerase GyrB family. As to quaternary structure, heterotetramer, composed of two GyrA and two GyrB chains. Non-hydrolyzable ATP analogs induce dimerization, novobiocin also induces a small amount of dimerization. The two subunits form an intertwined dimer where the GyrB ATPase transducer helix of 1 subunit connects to the Toprim domain of the other GyrB subunit through a 10 residue linker. In the heterotetramer, GyrA contains the active site tyrosine that forms a covalent intermediate with the DNA, while GyrB binds cofactors and catalyzes ATP hydrolysis. Mg(2+) is required as a cofactor. Mn(2+) serves as cofactor. It depends on Ca(2+) as a cofactor.

The protein localises to the cytoplasm. It carries out the reaction ATP-dependent breakage, passage and rejoining of double-stranded DNA.. Its function is as follows. A type II topoisomerase that negatively supercoils closed circular double-stranded (ds) DNA in an ATP-dependent manner. It probably also catalyzes the interconversion of other topological isomers of double-stranded DNA rings, including catenanes. Relaxes negatively supercoiled DNA in an ATP-independent manner. At comparable concentrations T.thermophilus gyrase does not introduce as many negative supercoils into DNA as the E.coli enzyme. Functionally, negative supercoiling favors strand separation, and DNA replication, transcription, recombination and repair, all of which involve strand separation. Type II topoisomerases break and join 2 DNA strands simultaneously in an ATP-dependent manner. This Thermus thermophilus (strain ATCC 27634 / DSM 579 / HB8) protein is DNA gyrase subunit B.